Consider the following 391-residue polypeptide: Tryptophan synthase beta chain (391 aa).

K84 is subject to N6-(pyridoxal phosphate)lysine.

Belongs to the TrpB family. Tetramer of two alpha and two beta chains. Pyridoxal 5'-phosphate serves as cofactor.

It catalyses the reaction (1S,2R)-1-C-(indol-3-yl)glycerol 3-phosphate + L-serine = D-glyceraldehyde 3-phosphate + L-tryptophan + H2O. Its pathway is amino-acid biosynthesis; L-tryptophan biosynthesis; L-tryptophan from chorismate: step 5/5. In terms of biological role, the beta subunit is responsible for the synthesis of L-tryptophan from indole and L-serine. This Thermoanaerobacter pseudethanolicus (strain ATCC 33223 / 39E) (Clostridium thermohydrosulfuricum) protein is Tryptophan synthase beta chain.